The primary structure comprises 379 residues: Cytochrome b (379 aa).

4 consecutive transmembrane segments (helical) span residues 33-53, 77-98, 113-133, and 178-198; these read FGSL…FLAM, WLIR…YLHI, WNIG…GYVL, and FFAF…IHLL. Residues H83 and H97 each contribute to the heme b site. Positions 182 and 196 each coordinate heme b. Residue H201 participates in a ubiquinone binding. The next 4 helical transmembrane spans lie at 226 to 246, 288 to 308, 320 to 340, and 347 to 367; these read YKDL…ALFY, LGGV…PILH, ASQL…WIGG, and YIII…VLNP.

Belongs to the cytochrome b family. The cytochrome bc1 complex contains 3 respiratory subunits (MT-CYB, CYC1 and UQCRFS1), 2 core proteins (UQCRC1 and UQCRC2) and probably 6 low-molecular weight proteins. The cofactor is heme b.

It is found in the mitochondrion inner membrane. Component of the ubiquinol-cytochrome c reductase complex (complex III or cytochrome b-c1 complex) that is part of the mitochondrial respiratory chain. The b-c1 complex mediates electron transfer from ubiquinol to cytochrome c. Contributes to the generation of a proton gradient across the mitochondrial membrane that is then used for ATP synthesis. The protein is Cytochrome b (mt-cyb) of Anguilla interioris (Highlands long-finned eel).